The chain runs to 480 residues: UDP-N-acetylmuramoyl-L-alanyl-D-glutamate--2,6-diaminopimelate ligase (480 aa).

Ser21 provides a ligand contact to UDP-N-acetyl-alpha-D-muramoyl-L-alanyl-D-glutamate. 98-104 serves as a coordination point for ATP; sequence GTNGKSS. Residues 144–145, Ser171, Gln177, and Arg179 each bind UDP-N-acetyl-alpha-D-muramoyl-L-alanyl-D-glutamate; that span reads TT. Lys211 carries the N6-carboxylysine modification. Residues Arg372, 396-399, Gly446, and Glu450 contribute to the meso-2,6-diaminopimelate site; that span reads DNPR. Positions 396–399 match the Meso-diaminopimelate recognition motif motif; sequence DNPR.

The protein belongs to the MurCDEF family. MurE subfamily. Mg(2+) serves as cofactor. Carboxylation is probably crucial for Mg(2+) binding and, consequently, for the gamma-phosphate positioning of ATP.

It is found in the cytoplasm. It carries out the reaction UDP-N-acetyl-alpha-D-muramoyl-L-alanyl-D-glutamate + meso-2,6-diaminopimelate + ATP = UDP-N-acetyl-alpha-D-muramoyl-L-alanyl-gamma-D-glutamyl-meso-2,6-diaminopimelate + ADP + phosphate + H(+). The protein operates within cell wall biogenesis; peptidoglycan biosynthesis. Catalyzes the addition of meso-diaminopimelic acid to the nucleotide precursor UDP-N-acetylmuramoyl-L-alanyl-D-glutamate (UMAG) in the biosynthesis of bacterial cell-wall peptidoglycan. The protein is UDP-N-acetylmuramoyl-L-alanyl-D-glutamate--2,6-diaminopimelate ligase of Rickettsia prowazekii (strain Madrid E).